The following is a 199-amino-acid chain: Copper transport protein CTR4 (199 aa).

Transmembrane regions (helical) follow at residues 62 to 82 (KGMF…IELI) and 152 to 172 (AFFV…FIFL).

This sequence belongs to the copper transporter (Ctr) (TC 1.A.56) family. SLC31A subfamily.

The protein localises to the membrane. Functionally, required for high affinity copper (probably reduced Cu I) transport into the cell. Plays a role in fungal pathogenesis during host infection. This is Copper transport protein CTR4 from Cryptococcus neoformans var. grubii serotype A (strain H99 / ATCC 208821 / CBS 10515 / FGSC 9487) (Filobasidiella neoformans var. grubii).